The sequence spans 158 residues: Endoribonuclease YbeY (158 aa).

3 residues coordinate Zn(2+): H119, H123, and H129.

Belongs to the endoribonuclease YbeY family. It depends on Zn(2+) as a cofactor.

The protein localises to the cytoplasm. Single strand-specific metallo-endoribonuclease involved in late-stage 70S ribosome quality control and in maturation of the 3' terminus of the 16S rRNA. The protein is Endoribonuclease YbeY of Acinetobacter baumannii (strain SDF).